Reading from the N-terminus, the 141-residue chain is uncharacterized protein (141 aa).

It localises to the cytoplasm. This is an uncharacterized protein from Homo sapiens (Human).